The chain runs to 148 residues: Transcription antitermination protein NusB (148 aa).

Belongs to the NusB family.

Its function is as follows. Involved in transcription antitermination. Required for transcription of ribosomal RNA (rRNA) genes. Binds specifically to the boxA antiterminator sequence of the ribosomal RNA (rrn) operons. The polypeptide is Transcription antitermination protein NusB (Desulfitobacterium hafniense (strain DSM 10664 / DCB-2)).